The primary structure comprises 122 residues: Large ribosomal subunit protein uL14c (122 aa).

This sequence belongs to the universal ribosomal protein uL14 family. As to quaternary structure, part of the 50S ribosomal subunit.

The protein localises to the plastid. It localises to the cyanelle. Binds to 23S rRNA. In Cyanophora paradoxa, this protein is Large ribosomal subunit protein uL14c.